The primary structure comprises 193 residues: Ion-translocating oxidoreductase complex subunit A (193 aa).

6 consecutive transmembrane segments (helical) span residues 5–25 (LMLL…FLGL), 39–59 (IGMG…TWLI), 62–82 (FLLV…LVIA), 102–122 (VLGI…VALL), 134–154 (VLYG…FAGL), and 170–190 (APIS…FAGL).

Belongs to the NqrDE/RnfAE family. As to quaternary structure, the complex is composed of six subunits: RnfA, RnfB, RnfC, RnfD, RnfE and RnfG.

Its subcellular location is the cell inner membrane. Part of a membrane-bound complex that couples electron transfer with translocation of ions across the membrane. The protein is Ion-translocating oxidoreductase complex subunit A of Azoarcus sp. (strain BH72).